A 294-amino-acid polypeptide reads, in one-letter code: NAD kinase (294 aa).

The active-site Proton acceptor is Asp74. Residues 74–75 (DG), 148–149 (NE), His159, Arg176, Asp178, 189–194 (TAYSLS), and Gln249 each bind NAD(+).

Belongs to the NAD kinase family. The cofactor is a divalent metal cation.

The protein resides in the cytoplasm. The catalysed reaction is NAD(+) + ATP = ADP + NADP(+) + H(+). Its function is as follows. Involved in the regulation of the intracellular balance of NAD and NADP, and is a key enzyme in the biosynthesis of NADP. Catalyzes specifically the phosphorylation on 2'-hydroxyl of the adenosine moiety of NAD to yield NADP. The polypeptide is NAD kinase (Vibrio cholerae serotype O1 (strain ATCC 39541 / Classical Ogawa 395 / O395)).